The sequence spans 241 residues: Pre-rRNA-processing protein pno1 (241 aa).

Residues A48 to P71 are disordered. T52 carries the phosphothreonine modification. The region spanning G162 to V214 is the KH domain.

This sequence belongs to the PNO1 family. As to quaternary structure, component of the small ribosomal subunit, ribosomal RNA processing complex (SSU RRP complex).

The protein resides in the cytoplasm. It localises to the nucleus. The protein localises to the nucleolus. Required for small ribosomal subunit (SSU) synthesis. Has a role in the processing of early nucleolar and late cytoplasmic pre-RNA species. The polypeptide is Pre-rRNA-processing protein pno1 (rbp28) (Schizosaccharomyces pombe (strain 972 / ATCC 24843) (Fission yeast)).